The chain runs to 463 residues: V-type proton ATPase subunit S1 (463 aa).

The signal sequence occupies residues 1–32 (MMAATVVSRIRTGTRWAPVLWLLLSLVAVAAA). Residues 33-225 (VAAEQQVPLV…TAVRPSRVAR (193 aa)) constitute a propeptide that is removed on maturation. Topologically, residues 33 to 412 (VAAEQQVPLV…EQFSYASDCA (380 aa)) are lumenal. Residues N164, N255, N267, N290, N297, N344, N351, and N399 are each glycosylated (N-linked (GlcNAc...) asparagine). A helical transmembrane segment spans residues 413–433 (GFFSPGIWMGLLTTLFMLFIF). Over 434 to 463 (TYGLHMILSLKTMDRFDDRKGPTITLTQIV) the chain is Cytoplasmic.

The protein belongs to the vacuolar ATPase subunit S1 family. As to quaternary structure, accessory component of the multisubunit proton-transporting vacuolar (V)-ATPase protein pump. Interacts (via N-terminus) with ATP6AP2 (via N-terminus). Interacts with RNASEK. Interacts with TMEM106B (via C-terminus). N-glycosylated. As to expression, expressed in brain (at protein level).

The protein localises to the endoplasmic reticulum membrane. Its subcellular location is the endoplasmic reticulum-Golgi intermediate compartment membrane. The protein resides in the cytoplasmic vesicle. It is found in the secretory vesicle. It localises to the synaptic vesicle membrane. The protein localises to the clathrin-coated vesicle membrane. In terms of biological role, accessory subunit of the proton-transporting vacuolar (V)-ATPase protein pump, which is required for luminal acidification of secretory vesicles. Guides the V-type ATPase into specialized subcellular compartments, such as neuroendocrine regulated secretory vesicles or the ruffled border of the osteoclast, thereby regulating its activity. Involved in membrane trafficking and Ca(2+)-dependent membrane fusion. May play a role in the assembly of the V-type ATPase complex. In aerobic conditions, involved in intracellular iron homeostasis, thus triggering the activity of Fe(2+) prolyl hydroxylase (PHD) enzymes, and leading to HIF1A hydroxylation and subsequent proteasomal degradation. In islets of Langerhans cells, may regulate the acidification of dense-core secretory granules. This is V-type proton ATPase subunit S1 (Atp6ap1) from Rattus norvegicus (Rat).